The sequence spans 545 residues: MSTSLNYKSFSKEQQTMDNLEKQLICPICLEMFTKPVVILPCQHNLCRKCASDIFQASNPYLPTRGGTTVASGGRFRCPSCRHEVVLDRHGVYGLQRNLLVENIIDIYKQESTRPEKKLDQPMCEEHEEERINIYCLNCEVPTCSLCKVFGAHKDCQVAPLTHVFQRQKSELSDGIAVLVGSNDRVQGVISQLEDTCKTIEECCRKQKQDLCEKFDHLYGILEERKTEMTQAITRTQEEKLEHVRTLIRKYSDHLENVSKLVESGIQFMDEPEMAVFLQNAKTLLQKIVEASKAFQMEKLEQGYEIMSNFTVNLNREEKIIREIDFSREEEEEEDAGEIDEEGEGEDAVEVEEAENVQIASSGEEESLEKAAEPSQLPAELQVAPEPLPASSPEPFSSMPPAADVLVTQGEVVPIGSQQTTQSETSGPSAAETADPLFYPSWYKGQSRKTSSNPPCTHGSEGLGQIGPLGIEDSSVQSAEVAEAATNEQAAVSGKESSSTAATSQIGFEAPSPQGQSAALGSGGGADPEPARHVFSFSWLNSLNE.

The segment at 26-82 adopts an RING-type zinc-finger fold; that stretch reads CPICLEMFTKPVVILPCQHNLCRKCASDIFQASNPYLPTRGGTTVASGGRFRCPSCR. Residues 119 to 161 form a B box-type zinc finger; it reads LDQPMCEEHEEERINIYCLNCEVPTCSLCKVFGAHKDCQVAPL. Zn(2+)-binding residues include cysteine 124, histidine 127, cysteine 147, and histidine 153. A COS domain is found at 269–327; that stretch reads MDEPEMAVFLQNAKTLLQKIVEASKAFQMEKLEQGYEIMSNFTVNLNREEKIIREIDFS. 3 disordered regions span residues 324–352, 359–378, and 417–532; these read IDFS…VEVE, IASS…SQLP, and SQQT…EPAR. Residues 328–352 show a composition bias toward acidic residues; sequence REEEEEEDAGEIDEEGEGEDAVEVE. Over residues 417–428 the composition is skewed to polar residues; the sequence is SQQTTQSETSGP. Low complexity predominate over residues 474 to 485; the sequence is SSVQSAEVAEAA. The span at 486–506 shows a compositional bias: polar residues; sequence TNEQAAVSGKESSSTAATSQI.

Post-translationally, targeted for degradation through the proteasomal and lysosomal pathways in the presence of SUMO3. Widely expressed in various tissues, besides skeletal muscle and heart, such as brain, lung, liver, spleen and kidney.

It is found in the nucleus. The protein resides in the cytoplasm. It catalyses the reaction S-ubiquitinyl-[E2 ubiquitin-conjugating enzyme]-L-cysteine + [acceptor protein]-L-lysine = [E2 ubiquitin-conjugating enzyme]-L-cysteine + N(6)-ubiquitinyl-[acceptor protein]-L-lysine.. E3 ubiquitin ligase that plays an important role in regulating cardiac development and contractility, muscle growth, metabolism, and fiber-type differentiation. Acts as a critical factor that regulates cardiomyocyte size during development in concert with TRIM63 by regulating E2F1-mediated gene expression. Plays a role in apoptosis induction in cardiomyocytes by promoting ubiquitination of the DUSP1 phosphatase. Promotes non-canonical NF-kappa-B signaling and B-cell-mediated immune responses by mediating NFKB2 'Lys-48'-linked ubiquitination and processing. In turn, NFKB2 is further processed by valosin-containing protein/VCP, an ATPase that mediates ubiquitin-dependent protein degradation by the proteasome. May play a role in preventing macrophages from producing inflammatory factors and migrating by downregulating the level of nuclear NF-kappa-B subunit RELA. Modifies also PPARG via polyubiquitination and accelerates PPARG proteasomal degradation to inhibit its activity. The sequence is that of Tripartite motif-containing 55 (Trim55) from Mus musculus (Mouse).